We begin with the raw amino-acid sequence, 278 residues long: Pyrroline-5-carboxylate reductase 2 (278 aa).

The protein belongs to the pyrroline-5-carboxylate reductase family.

The protein localises to the cytoplasm. The enzyme catalyses L-proline + NADP(+) = (S)-1-pyrroline-5-carboxylate + NADPH + 2 H(+). The catalysed reaction is L-proline + NAD(+) = (S)-1-pyrroline-5-carboxylate + NADH + 2 H(+). It participates in amino-acid biosynthesis; L-proline biosynthesis; L-proline from L-glutamate 5-semialdehyde: step 1/1. Catalyzes the reduction of 1-pyrroline-5-carboxylate (PCA) to L-proline. This Bacillus subtilis (strain 168) protein is Pyrroline-5-carboxylate reductase 2 (proI).